An 80-amino-acid chain; its full sequence is Type VII secretion system accessory factor EsaB (80 aa).

The protein belongs to the EsaB family.

The protein resides in the cytoplasm. In terms of biological role, seems to regulate secreted factors that contribute to the establishment of persistent infections in the host. The sequence is that of Type VII secretion system accessory factor EsaB from Staphylococcus aureus (strain COL).